We begin with the raw amino-acid sequence, 279 residues long: Diaminopimelate epimerase (279 aa).

Positions 14 and 68 each coordinate substrate. Cysteine 77 functions as the Proton donor in the catalytic mechanism. Substrate is bound by residues 78-79 (GN), asparagine 191, and 207-208 (ER). The active-site Proton acceptor is cysteine 217. Residue 218 to 219 (GT) participates in substrate binding.

It belongs to the diaminopimelate epimerase family. As to quaternary structure, homodimer.

The protein localises to the cytoplasm. The enzyme catalyses (2S,6S)-2,6-diaminopimelate = meso-2,6-diaminopimelate. It functions in the pathway amino-acid biosynthesis; L-lysine biosynthesis via DAP pathway; DL-2,6-diaminopimelate from LL-2,6-diaminopimelate: step 1/1. In terms of biological role, catalyzes the stereoinversion of LL-2,6-diaminopimelate (L,L-DAP) to meso-diaminopimelate (meso-DAP), a precursor of L-lysine. In Methanothrix thermoacetophila (strain DSM 6194 / JCM 14653 / NBRC 101360 / PT) (Methanosaeta thermophila), this protein is Diaminopimelate epimerase.